A 324-amino-acid chain; its full sequence is Glucosyl-3-phosphoglycerate synthase (324 aa).

UDP-alpha-D-glucose contacts are provided by residues 50–54 (PALNE), S81, K114, and 134–135 (DS). Residue D136 participates in Mn(2+) binding. A (2R)-3-phosphoglycerate-binding site is contributed by 184 to 187 (GRVT). Residues 229 to 232 (YGVE) and 256 to 261 (RAHRNR) each bind UDP-alpha-D-glucose. H258 contacts Mn(2+). N260 is a (2R)-3-phosphoglycerate binding site.

It belongs to the glycosyltransferase 2 family. Homotrimer. It depends on Mg(2+) as a cofactor. The cofactor is Mn(2+).

The enzyme catalyses an NDP-alpha-D-glucose + (2R)-3-phosphoglycerate = (2R)-2-O-(alpha-D-glucopyranosyl)-3-phospho-glycerate + a ribonucleoside 5'-diphosphate + H(+). It catalyses the reaction (2R)-3-phosphoglycerate + UDP-alpha-D-glucose = (2R)-2-O-(alpha-D-glucopyranosyl)-3-phospho-glycerate + UDP + H(+). The catalysed reaction is ADP-alpha-D-glucose + (2R)-3-phosphoglycerate = (2R)-2-O-(alpha-D-glucopyranosyl)-3-phospho-glycerate + ADP + H(+). It carries out the reaction GDP-D-glucose + (2R)-3-phosphoglycerate = (2R)-2-O-(alpha-D-glucopyranosyl)-3-phospho-glycerate + GDP + H(+). Involved in the biosynthesis of 6-O-methylglucose lipopolysaccarides (MGLPs). Catalyzes the transfer of the glucose moiety from a nuleotide sugar such as UDP-alpha-D-glucose to the position 2 of 3-phospho-D-glycerate (3-PGA) to form glucosyl-3-phosphoglycerate (GPG). It can use UDP-glucose, ADP-glucose and GDP-glucose as sugar donor substrates with decreasing affinity and with 3-PGA as an acceptor. D-glycerate can only be an acceptor with ADP-glucose and at a very low rate. The polypeptide is Glucosyl-3-phosphoglycerate synthase (gpgS) (Mycobacterium bovis (strain ATCC BAA-935 / AF2122/97)).